Consider the following 285-residue polypeptide: 2-dehydro-3-deoxyphosphooctonate aldolase (285 aa).

This sequence belongs to the KdsA family.

It is found in the cytoplasm. It catalyses the reaction D-arabinose 5-phosphate + phosphoenolpyruvate + H2O = 3-deoxy-alpha-D-manno-2-octulosonate-8-phosphate + phosphate. It functions in the pathway carbohydrate biosynthesis; 3-deoxy-D-manno-octulosonate biosynthesis; 3-deoxy-D-manno-octulosonate from D-ribulose 5-phosphate: step 2/3. It participates in bacterial outer membrane biogenesis; lipopolysaccharide biosynthesis. The polypeptide is 2-dehydro-3-deoxyphosphooctonate aldolase (Polaromonas sp. (strain JS666 / ATCC BAA-500)).